The following is a 172-amino-acid chain: uncharacterized protein (172 aa).

The 169-residue stretch at 3–171 folds into the PfpI endopeptidase domain; sequence KKVAIILADE…FNREIVKKLE (169 aa).

It belongs to the peptidase C56 family.

This is an uncharacterized protein from Staphylococcus epidermidis (strain ATCC 35984 / DSM 28319 / BCRC 17069 / CCUG 31568 / BM 3577 / RP62A).